The sequence spans 921 residues: Phototropin-1B (921 aa).

A compositionally biased stretch (gly residues) spans 1–11 (MASKGTEGGHG). Disordered stretches follow at residues 1–59 (MASK…SPFL) and 88–118 (TGLPQGVSARPSSGSARTSSEDNPQQQQSAA). The segment covering 40-51 (SSASSFRTAAAA) has biased composition (low complexity). The span at 97-117 (RPSSGSARTSSEDNPQQQQSA) shows a compositional bias: polar residues. Residues 123-197 (VSEELRAALS…KIRQSLANGS (75 aa)) form the PAS 1 domain. FMN contacts are provided by residues 172-177 (NCRFLQ), Arg-190, Asn-205, Asn-215, and Gln-236. At Cys-173 the chain carries S-4a-FMN cysteine. Residues 197–251 (SNYCGRILNYKKDGTPFWNLLTIAPIKDEDGRLLKFIGMQVEVSKYTEGKKDTVV) enclose the PAC 1 domain. Positions 286–295 (RSLSESSNNT) are enriched in polar residues. 2 disordered regions span residues 286–345 (RSLS…QVNR) and 366–391 (EKNMLKPRDEDPLIDSDDERPESFED). Basic and acidic residues-rich tracts occupy residues 312-321 (PSKRSSESGS) and 366-376 (EKNMLKPRDED). Residues 400–473 (RGIDLATTLE…RKIRDAIDNQ (74 aa)) enclose the PAS 2 domain. FMN is bound by residues 449–454 (NCRFLQ), Arg-467, Asn-482, Asn-492, and Gln-513. Cys-450 is subject to S-4a-FMN cysteine. One can recognise a PAC 2 domain in the interval 474 to 528 (AEVTVQLINYTKSGKKFWNLFHLQPMRDQKGDVQYFIGVQLDGTEHVQDDAAKEG). The region spanning 594–881 (FRPVKPLGSG…ANEIKGHPFF (288 aa)) is the Protein kinase domain. ATP is bound by residues 600–608 (LGSGDTGSV) and Lys-623. Catalysis depends on Asp-719, which acts as the Proton acceptor.

This sequence belongs to the protein kinase superfamily. Ser/Thr protein kinase family. As to quaternary structure, homodimer. The cofactor is FMN. In terms of processing, autophosphorylated in response to blue light irradiation. Post-translationally, 2 molecules of FMN bind covalently to cysteines after exposure to blue light and are reversed in the dark.

The catalysed reaction is L-seryl-[protein] + ATP = O-phospho-L-seryl-[protein] + ADP + H(+). The enzyme catalyses L-threonyl-[protein] + ATP = O-phospho-L-threonyl-[protein] + ADP + H(+). Its function is as follows. Protein kinase that acts as a blue light photoreceptor in a signal-transduction pathway for phototropic responses. Regulates a wide range of physiological activities in plants that maximize the efficiency of photosynthesis, such as chloroplast relocations, stomata opening, and leaf expansion. This chain is Phototropin-1B (PHOT1B), found in Oryza sativa subsp. japonica (Rice).